The chain runs to 215 residues: 3-demethoxyubiquinol 3-hydroxylase (215 aa).

Positions 64, 94, 97, 146, 178, and 181 each coordinate Fe cation.

The protein belongs to the COQ7 family. Fe cation serves as cofactor.

The protein localises to the cell membrane. The catalysed reaction is a 5-methoxy-2-methyl-3-(all-trans-polyprenyl)benzene-1,4-diol + AH2 + O2 = a 3-demethylubiquinol + A + H2O. Its pathway is cofactor biosynthesis; ubiquinone biosynthesis. Its function is as follows. Catalyzes the hydroxylation of 2-nonaprenyl-3-methyl-6-methoxy-1,4-benzoquinol during ubiquinone biosynthesis. This Pseudomonas putida (strain GB-1) protein is 3-demethoxyubiquinol 3-hydroxylase.